Consider the following 70-residue polypeptide: Large ribosomal subunit protein eL38 (70 aa).

Lys-4 participates in a covalent cross-link: Glycyl lysine isopeptide (Lys-Gly) (interchain with G-Cter in SUMO2). N6-acetyllysine; alternate is present on Lys-9. Lys-9 is covalently cross-linked (Glycyl lysine isopeptide (Lys-Gly) (interchain with G-Cter in SUMO2); alternate). The residue at position 67 (Lys-67) is an N6-acetyllysine.

Belongs to the eukaryotic ribosomal protein eL38 family. Component of the large ribosomal subunit.

It localises to the cytoplasm. Functionally, component of the large ribosomal subunit. The ribosome is a large ribonucleoprotein complex responsible for the synthesis of proteins in the cell. In Mus musculus (Mouse), this protein is Large ribosomal subunit protein eL38 (Rpl38).